The following is a 265-amino-acid chain: Phosphate import ATP-binding protein PstB (265 aa).

The 243-residue stretch at 18-260 folds into the ABC transporter domain; sequence IAAKGVNVYY…PEDPRTESYI (243 aa). 50 to 57 serves as a coordination point for ATP; that stretch reads GPSGCGKS.

The protein belongs to the ABC transporter superfamily. Phosphate importer (TC 3.A.1.7) family. As to quaternary structure, the complex is composed of two ATP-binding proteins (PstB), two transmembrane proteins (PstC and PstA) and a solute-binding protein (PstS).

Its subcellular location is the cell inner membrane. The enzyme catalyses phosphate(out) + ATP + H2O = ADP + 2 phosphate(in) + H(+). Part of the ABC transporter complex PstSACB involved in phosphate import. Responsible for energy coupling to the transport system. The polypeptide is Phosphate import ATP-binding protein PstB (Ruegeria sp. (strain TM1040) (Silicibacter sp.)).